Reading from the N-terminus, the 645-residue chain is MSERKEGRGKGKGKKKDRGSRGKPAPAEGDPSPALPPRLKEMKSQESAAGSKLVLRCETSSEYSSLRFKWFKNGNELNRRNKPQNVKIQKKPGKSELRINKASLADSGEYMCKVISKLGNDSASANITIVESNDLTTGMSASTERPYVSSESPIRISVSTEGANTSSSTSTSTTGTSHLIKCAEKEKTFCVNGGECFMVKDLSNPSRYLCKCPNEFTGDRCQNYVMASFYKHLGIEFMEAEELYQKRVLTITGICIALLVVGIMCVVAYCKTKKQRQKLHDRLRQSLRSERNNMVNIANGPHHPNPPPENVQLVNQYVSKNVISSEHIVEREVETSFSTSHYTSTAHHSTTVTQTPSHSWSNGHTESIISESHSVIMMSSVENSRHSSPAGGPRGRLHGLGGPRECNSFLRHARETPDSYRDSPHSERYVSAMTTPARMSPVDFHTPSSPKSPPSEMSPPVSSMTVSMPSVAVSPFVEEERPLLLVTPPRLREKKYDHHPQQLNSFHHNPAHQSTSLPPSPLRIVEDEEYETTQEYEPIQEPIKKVTNSRRAKRTKPNGHIANRLEMDSNPSSVSSNSESETEDERVGEDTPFLGIQNPLAASLEVAPAFRLAESRTNPAGRFSTQEELQARLSSVIANQDPIAV.

Residues 1-19 (MSERKEGRGKGKGKKKDRG) constitute a propeptide that is removed on maturation. Residues 1–52 (MSERKEGRGKGKGKKKDRGSRGKPAPAEGDPSPALPPRLKEMKSQESAAGSK) form a disordered region. At 20 to 247 (SRGKPAPAEG…MEAEELYQKR (228 aa)) the chain is on the extracellular side. The Ig-like C2-type domain maps to 37-128 (PRLKEMKSQE…GNDSASANIT (92 aa)). Cysteines 57 and 112 form a disulfide. Residues 139–164 (MSASTERPYVSSESPIRISVSTEGAN) are compositionally biased toward polar residues. The disordered stretch occupies residues 139-175 (MSASTERPYVSSESPIRISVSTEGANTSSSTSTSTTG). Residues 165-175 (TSSSTSTSTTG) are compositionally biased toward low complexity. One can recognise an EGF-like domain in the interval 178-222 (HLIKCAEKEKTFCVNGGECFMVKDLSNPSRYLCKCPNEFTGDRCQ). 3 disulfides stabilise this stretch: Cys182/Cys196, Cys190/Cys210, and Cys212/Cys221. A helical transmembrane segment spans residues 248 to 268 (VLTITGICIALLVVGIMCVVA). Residues 269-645 (YCKTKKQRQK…VIANQDPIAV (377 aa)) lie on the Cytoplasmic side of the membrane. A compositionally biased stretch (low complexity) spans 340–355 (SHYTSTAHHSTTVTQT). Disordered stretches follow at residues 340–364 (SHYTSTAHHSTTVTQTPSHSWSNGH), 380–406 (SVENSRHSSPAGGPRGRLHGLGGPREC), 433–463 (MTTPARMSPVDFHTPSSPKSPPSEMSPPVSS), and 531–593 (ETTQ…DTPF). The segment covering 392–402 (GPRGRLHGLGG) has biased composition (gly residues). Basic residues predominate over residues 547–557 (TNSRRAKRTKP). Low complexity predominate over residues 568–579 (DSNPSSVSSNSE).

The protein belongs to the neuregulin family. The cytoplasmic domain interacts with the LIM domain region of LIMK1. Forms a ternary complex with ERBB3 and ITGAV:ITGB3 or ITGA6:ITGB4. Interacts with NRDC and BACE1. In terms of processing, proteolytic cleavage close to the plasma membrane on the external face leads to the release of the soluble growth factor form. N- and O-glycosylated. Extensive glycosylation precedes the proteolytic cleavage.

The protein resides in the cell membrane. The protein localises to the secreted. Functionally, direct ligand for ERBB3 and ERBB4 tyrosine kinase receptors. Concomitantly recruits ERBB1 and ERBB2 coreceptors, resulting in ligand-stimulated tyrosine phosphorylation and activation of the ERBB receptors. Perform diverse functions such as inducing growth and differentiation of epithelial, glial, neuronal, and skeletal muscle cells; inducing expression of acetylcholine receptor in synaptic vesicles during the formation of the neuromuscular junction; stimulating lobuloalveolar budding and milk production in the mammary gland and inducing differentiation of mammary tumor cells; stimulating Schwann cell proliferation; implication in the development of the myocardium such as trabeculation of the developing heart. Binds to ERBB4 and ERBB3. Acts as a ligand for integrins and binds (via EGF domain) to integrins ITGAV:ITGB3 or ITGA6:ITGB4. Its binding to integrins and subsequent ternary complex formation with integrins and ERRB3 are essential for NRG1-ERBB signaling. Induces the phosphorylation and activation of MAPK3/ERK1, MAPK1/ERK2 and AKT1, and ligand-dependent ERBB4 endocytosis is essential for the NRG1-mediated activation of these kinases in neurons. In Mus musculus (Mouse), this protein is Pro-neuregulin-1, membrane-bound isoform.